Here is a 632-residue protein sequence, read N- to C-terminus: Pescadillo homolog (632 aa).

Positions 306 to 341 are disordered; it reads GDDADVDMDEGAKETDEEEDEDFVERPSKAQEVDDV. Residues 307–328 show a composition bias toward acidic residues; that stretch reads DDADVDMDEGAKETDEEEDEDF. Residues 361-459 enclose the BRCT domain; that stretch reads RQNLLFSPYT…KIISSEGYGP (99 aa). Disordered regions lie at residues 485–535, 565–585, and 601–632; these read GEKA…QNPS, TKVH…EEDL, and MQYS…EAKA. The span at 492–516 shows a compositional bias: acidic residues; the sequence is QEGEEEEEAAEQDEGESEDEEEDGK. Residues 521-531 show a composition bias toward low complexity; it reads AEYPPALLAAA. Basic and acidic residues-rich tracts occupy residues 576–585 and 605–616; these read QKEKKGEEDL and NREKAAEKEKLE. The stretch at 595 to 632 forms a coiled coil; that stretch reads AKLYEKMQYSNREKAAEKEKLEKKRKAIEKRKAKEAKA.

The protein belongs to the pescadillo family. As to quaternary structure, component of the NOP7 complex, composed of ERB1, NOP7 and YTM1. The complex is held together by ERB1, which interacts with NOP7 via its N-terminal domain and with YTM1 via a high-affinity interaction between the seven-bladed beta-propeller domains of the 2 proteins. The NOP7 complex associates with the 66S pre-ribosome.

It is found in the nucleus. Its subcellular location is the nucleolus. It localises to the nucleoplasm. Functionally, component of the NOP7 complex, which is required for maturation of the 25S and 5.8S ribosomal RNAs and formation of the 60S ribosome. The sequence is that of Pescadillo homolog from Cryptococcus neoformans var. neoformans serotype D (strain B-3501A) (Filobasidiella neoformans).